The chain runs to 377 residues: Proteinase-activated receptor 3 (377 aa).

Residues 1-19 (MRAAIFAAIGALLLSPASC) form the signal peptide. Residues 20–38 (QSGMEYDADNLAKPTLSIK) constitute a propeptide, removed for receptor activation. At 39 to 94 (TFRGAPQNSFEEFPLSAIEGWTGTTKTVKIKCPEELDSNLHVNNATMGYLSSPLST) the chain is on the extracellular side. N82 carries an N-linked (GlcNAc...) asparagine glycan. Residues 95-120 (KLIPAIYILVFAVGMPANAVTLWMLF) form a helical membrane-spanning segment. Topologically, residues 121 to 127 (RTRTIRM) are cytoplasmic. A helical membrane pass occupies residues 128-147 (TIFYTNLAIADFLFCVTLPF). Residues 148–166 (RIAYHLNGNNWVFGEVMCR) lie on the Extracellular side of the membrane. A disulfide bridge connects residues C165 and C244. A helical transmembrane segment spans residues 167–188 (ATTVIFYGNMYCSILLLACISI). Topologically, residues 189-205 (NRYLAIVHPFTYRGLPK) are cytoplasmic. The chain crosses the membrane as a helical span at residues 206–229 (RTYALLTCGLVWTTVFLYMLPFFI). Over 230-259 (LKQEYYLVQQDITTCHDVHNTCESSSPFQL) the chain is Extracellular. A helical membrane pass occupies residues 260 to 279 (YYFISLAFFGFLIPFLVIIY). Topologically, residues 280-296 (CYTAIIWTLNAKDRRWL) are cytoplasmic. The helical transmembrane segment at 297–321 (WYIKASLLTFVIFTICFAPSNIILI) threads the bilayer. Over 322–335 (IHHANYYYSNTDAL) the chain is Extracellular. A helical membrane pass occupies residues 336–360 (YFVYLIALCLGSLNSCLDPFLYFLM). Topologically, residues 361–377 (SKITDHSTAYLTMVKLS) are cytoplasmic.

It belongs to the G-protein coupled receptor 1 family. Interacts with INSC/inscuteable and GPSM2. In terms of processing, a proteolytic cleavage generates a new N-terminus that functions as a tethered ligand.

The protein resides in the cell membrane. Functionally, receptor for activated thrombin coupled to G proteins that stimulate phosphoinositide hydrolysis. In Bos taurus (Bovine), this protein is Proteinase-activated receptor 3 (F2RL2).